Here is a 181-residue protein sequence, read N- to C-terminus: Protein GrpE (181 aa).

Positions 1–13 are enriched in polar residues; sequence MENTQENPATQSA. A disordered region spans residues 1 to 39; that stretch reads MENTQENPATQSAEDIGSEKQAAQGAAPAAEAADAALAE. The segment covering 21-39 has biased composition (low complexity); sequence QAAQGAAPAAEAADAALAE.

Belongs to the GrpE family. In terms of assembly, homodimer.

It localises to the cytoplasm. Participates actively in the response to hyperosmotic and heat shock by preventing the aggregation of stress-denatured proteins, in association with DnaK and GrpE. It is the nucleotide exchange factor for DnaK and may function as a thermosensor. Unfolded proteins bind initially to DnaJ; upon interaction with the DnaJ-bound protein, DnaK hydrolyzes its bound ATP, resulting in the formation of a stable complex. GrpE releases ADP from DnaK; ATP binding to DnaK triggers the release of the substrate protein, thus completing the reaction cycle. Several rounds of ATP-dependent interactions between DnaJ, DnaK and GrpE are required for fully efficient folding. The protein is Protein GrpE of Burkholderia lata (strain ATCC 17760 / DSM 23089 / LMG 22485 / NCIMB 9086 / R18194 / 383).